A 303-amino-acid polypeptide reads, in one-letter code: 2-dehydropantoate 2-reductase (303 aa).

NADP(+) contacts are provided by residues 7–12, asparagine 98, and alanine 122; that span reads GCGALG. Residue asparagine 98 coordinates substrate. Lysine 176 serves as the catalytic Proton donor. Residues asparagine 180, asparagine 184, asparagine 194, and serine 244 each coordinate substrate. Glutamate 256 contacts NADP(+).

This sequence belongs to the ketopantoate reductase family. In terms of assembly, monomer.

The protein resides in the cytoplasm. The enzyme catalyses (R)-pantoate + NADP(+) = 2-dehydropantoate + NADPH + H(+). Its pathway is cofactor biosynthesis; (R)-pantothenate biosynthesis; (R)-pantoate from 3-methyl-2-oxobutanoate: step 2/2. Its function is as follows. Catalyzes the NADPH-dependent reduction of ketopantoate into pantoic acid. The sequence is that of 2-dehydropantoate 2-reductase (panE) from Salmonella typhi.